A 71-amino-acid polypeptide reads, in one-letter code: Pro-glucagon (71 aa).

It belongs to the glucagon family.

It is found in the secreted. Plays a key role in glucose metabolism and homeostasis. Regulates blood glucose by increasing gluconeogenesis and decreasing glycolysis. The protein is Pro-glucagon (gcg) of Piaractus mesopotamicus (Small-scaled pacu).